Here is a 419-residue protein sequence, read N- to C-terminus: Satellite RNA 48 kDa protein (419 aa).

Basic residues predominate over residues 1–27 (MQKTMTRHLSRNRKPHEKVSHVPRRGP). Residues 1–66 (MQKTMTRHLS…SLGRKPYNPG (66 aa)) form a disordered region.

The protein belongs to the nepovirus satellite RNA 48 kDa protein family.

This Allium porrum (Leek) protein is Satellite RNA 48 kDa protein.